The following is a 600-amino-acid chain: Sulfite reductase [NADPH] flavoprotein alpha-component (600 aa).

One can recognise a Flavodoxin-like domain in the interval 63–201 (ITLISASQTG…AAQAWRQRVV (139 aa)). FMN contacts are provided by residues 69-74 (SQTGNA), 116-119 (STQG), and 152-161 (LGDTSYEHFC). The FAD-binding FR-type domain occupies 235-449 (ESPLTATLSV…IEHNDNFRLP (215 aa)). FAD contacts are provided by residues Thr323, Ala357, 387–390 (RLYS), 405–407 (TVG), and 420–423 (GGAS). NADP(+)-binding positions include 520-521 (SR), 526-530 (KIYVQ), and Asp562. Tyr600 contacts FAD.

This sequence belongs to the NADPH-dependent sulphite reductase flavoprotein subunit CysJ family. In the N-terminal section; belongs to the flavodoxin family. It in the C-terminal section; belongs to the flavoprotein pyridine nucleotide cytochrome reductase family. In terms of assembly, alpha(8)-beta(8). The alpha component is a flavoprotein, the beta component is a hemoprotein. FAD is required as a cofactor. FMN serves as cofactor.

It catalyses the reaction hydrogen sulfide + 3 NADP(+) + 3 H2O = sulfite + 3 NADPH + 4 H(+). It participates in sulfur metabolism; hydrogen sulfide biosynthesis; hydrogen sulfide from sulfite (NADPH route): step 1/1. Its function is as follows. Component of the sulfite reductase complex that catalyzes the 6-electron reduction of sulfite to sulfide. This is one of several activities required for the biosynthesis of L-cysteine from sulfate. The flavoprotein component catalyzes the electron flow from NADPH -&gt; FAD -&gt; FMN to the hemoprotein component. The protein is Sulfite reductase [NADPH] flavoprotein alpha-component of Cronobacter sakazakii (strain ATCC BAA-894) (Enterobacter sakazakii).